The chain runs to 445 residues: Phosphoglucosamine mutase (445 aa).

Serine 101 functions as the Phosphoserine intermediate in the catalytic mechanism. Positions 101, 240, 242, and 244 each coordinate Mg(2+). Phosphoserine is present on serine 101.

It belongs to the phosphohexose mutase family. Mg(2+) serves as cofactor. Activated by phosphorylation.

It catalyses the reaction alpha-D-glucosamine 1-phosphate = D-glucosamine 6-phosphate. In terms of biological role, catalyzes the conversion of glucosamine-6-phosphate to glucosamine-1-phosphate. The protein is Phosphoglucosamine mutase of Pseudomonas aeruginosa (strain UCBPP-PA14).